The primary structure comprises 231 residues: Flagellar L-ring protein (231 aa).

The first 18 residues, Met-1–Gly-18, serve as a signal peptide directing secretion. Cys-19 carries N-palmitoyl cysteine lipidation. A lipid anchor (S-diacylglycerol cysteine) is attached at Cys-19. The tract at residues Leu-118 to Ser-141 is disordered.

Belongs to the FlgH family. As to quaternary structure, the basal body constitutes a major portion of the flagellar organelle and consists of four rings (L,P,S, and M) mounted on a central rod.

The protein resides in the cell outer membrane. The protein localises to the bacterial flagellum basal body. Its function is as follows. Assembles around the rod to form the L-ring and probably protects the motor/basal body from shearing forces during rotation. The polypeptide is Flagellar L-ring protein (Pseudomonas aeruginosa (strain LESB58)).